We begin with the raw amino-acid sequence, 882 residues long: Valine--tRNA ligase (882 aa).

A 'HIGH' region motif is present at residues 45–55 (PNVTGKLHLGH). Positions 519–523 (KMSKS) match the 'KMSKS' region motif. Lys522 is a binding site for ATP. Positions 808 to 882 (LADLLNVEEE…RIAEMQKLVK (75 aa)) form a coiled coil.

The protein belongs to the class-I aminoacyl-tRNA synthetase family. ValS type 1 subfamily. Monomer.

The protein localises to the cytoplasm. The catalysed reaction is tRNA(Val) + L-valine + ATP = L-valyl-tRNA(Val) + AMP + diphosphate. Catalyzes the attachment of valine to tRNA(Val). As ValRS can inadvertently accommodate and process structurally similar amino acids such as threonine, to avoid such errors, it has a 'posttransfer' editing activity that hydrolyzes mischarged Thr-tRNA(Val) in a tRNA-dependent manner. This Streptococcus pyogenes serotype M3 (strain ATCC BAA-595 / MGAS315) protein is Valine--tRNA ligase.